The chain runs to 416 residues: 5-hydroxytryptamine receptor 1A-beta (416 aa).

At 1–35 (MEGTNNTTGWTHFDSTSNRTSKSFDEEVKLSYQVV) the chain is on the extracellular side. N-linked (GlcNAc...) asparagine glycans are attached at residues N5, N6, and N18. A helical transmembrane segment spans residues 36–56 (TSFLLGALILCSIFGNACVVA). The Cytoplasmic portion of the chain corresponds to 57 to 70 (AIALERSLQNVANY). The helical transmembrane segment at 71 to 95 (LIGSLAVTDLMVSVLVLPMAALYQV) threads the bilayer. Residues 96–104 (LNRWTLGQI) are Extracellular-facing. A helical membrane pass occupies residues 105-129 (PCDIFISLDMLCCTSSILHLCVIAL). A disulfide bridge connects residues C106 and C189. 2 residues coordinate serotonin: D113 and C117. Positions 130-132 (DRY) match the DRY motif; important for ligand-induced conformation changes motif. The Cytoplasmic segment spans residues 130-149 (DRYWAITEPIDYMKKRTPRR). Residues 150-171 (AAVLISVTWLVGFSISIPPMLI) traverse the membrane as a helical segment. At 172–195 (MRSQPSSMAEDRANSKQCKITQDP) the chain is on the extracellular side. A helical transmembrane segment spans residues 196 to 218 (WYTIYSTFGAFYIPLTLMLVLYG). The Cytoplasmic portion of the chain corresponds to 219–340 (RIFKAARFRI…LARERKTVKT (122 aa)). Residues K339, T340, and G346 each coordinate 1D-myo-inositol 4-phosphate. Residues 341 to 364 (LGIIMGTFILCWLPFFIVALVMPF) form a helical membrane-spanning segment. Residues 365 to 372 (CQESCFMP) lie on the Extracellular side of the membrane. Residues 373-397 (HWLKDVINWLGYSNSLLNPIIYAYF) form a helical membrane-spanning segment. An NPxxY motif; important for ligand-induced conformation changes and signaling motif is present at residues 390–394 (NPIIY). Residues F397, N398, and K399 each contribute to the 1D-myo-inositol 4-phosphate site. Over 398–416 (NKDFQSAFKKIIKCHFCRA) the chain is Cytoplasmic.

The protein belongs to the G-protein coupled receptor 1 family. 5-hydroxytryptamine receptor subfamily.

The protein resides in the cell membrane. With respect to regulation, G-protein coupled receptor activity is regulated by lipids: phosphatidylinositol 4-phosphate increases HTR1A-mediated activity. G-protein coupled receptor for 5-hydroxytryptamine (serotonin). Also functions as a receptor for various drugs and psychoactive substances. Ligand binding causes a conformation change that triggers signaling via guanine nucleotide-binding proteins (G proteins) and modulates the activity of downstream effectors, such as adenylate cyclase. HTR1A is coupled to G(i)/G(o) G alpha proteins and mediates inhibitory neurotransmission: signaling inhibits adenylate cyclase activity and activates a phosphatidylinositol-calcium second messenger system that regulates the release of Ca(2+) ions from intracellular stores. Beta-arrestin family members regulate signaling by mediating both receptor desensitization and resensitization processes. The chain is 5-hydroxytryptamine receptor 1A-beta (htr1a-B) from Takifugu rubripes (Japanese pufferfish).